Here is a 119-residue protein sequence, read N- to C-terminus: Putative membrane protein insertion efficiency factor (119 aa).

It belongs to the UPF0161 family.

It localises to the cell inner membrane. In terms of biological role, could be involved in insertion of integral membrane proteins into the membrane. The sequence is that of Putative membrane protein insertion efficiency factor from Brucella anthropi (strain ATCC 49188 / DSM 6882 / CCUG 24695 / JCM 21032 / LMG 3331 / NBRC 15819 / NCTC 12168 / Alc 37) (Ochrobactrum anthropi).